Reading from the N-terminus, the 74-residue chain is Antimicrobial peptide HsAp4 (74 aa).

The N-terminal stretch at 1–21 is a signal peptide; the sequence is MSRRRILILVLVTMLVKTMAG. A propeptide spanning residues 22-33 is cleaved from the precursor; the sequence is MESKWVETTYEI. Position 65 is an arginine amide (Arg-65). Residues 69–74 constitute a propeptide that is removed on maturation; it reads AISEQT.

Belongs to the non-disulfide-bridged peptide (NDBP) superfamily. Medium-length antimicrobial peptide (group 3) family. In terms of tissue distribution, expressed by the venom gland.

Its subcellular location is the secreted. It is found in the target cell membrane. Its function is as follows. Possesses antimicrobial activity against both Gram-negative and Gram-positive bacteria, as well as against the fungus C.tropicalis. Also possesses a relatively high hemolytic activity. May act by disrupting the integrity of the bacterial cell membrane. This is Antimicrobial peptide HsAp4 from Heterometrus spinifer (Asia giant forest scorpion).